We begin with the raw amino-acid sequence, 354 residues long: Probable mannitol dehydrogenase 1 (354 aa).

Residues Cys43, His65, Cys96, Cys99, Cys102, Cys110, and Cys158 each contribute to the Zn(2+) site.

It belongs to the zinc-containing alcohol dehydrogenase family. Zn(2+) serves as cofactor.

It catalyses the reaction D-mannitol + NAD(+) = D-mannose + NADH + H(+). Functionally, oxidizes mannitol to mannose. Provides the initial step by which translocated mannitol is committed to central metabolism and, by regulating mannitol pool size, is important in regulating salt tolerance at the cellular level. This Stylosanthes humilis (Townsville stylo) protein is Probable mannitol dehydrogenase 1 (CAD1).